The following is a 605-amino-acid chain: Formin-binding protein 1-like (605 aa).

An F-BAR domain is found at 1–263 (MSWGTELWDQ…AAKSVDERRD (263 aa)). Residues 66–258 (FTSCIAFFNI…EGMILAAKSV (193 aa)) are a coiled coil. Residues 245-535 (SKCLEGMILA…EFDDEFEDDD (291 aa)) form an interaction with CDC42 region. Ser-295 bears the Phosphoserine mark. The segment at 325–345 (FGKKPKPQSPPLTPTSLFTSS) is disordered. Residues 392–484 (LEDFSHLPPE…VEGKTGVRGD (93 aa)) are a coiled coil. One can recognise an REM-1 domain in the interval 397–474 (HLPPEQRRKK…IHKNEAWLSE (78 aa)). Over residues 480 to 490 (GVRGDRRHSSD) the composition is skewed to basic and acidic residues. The segment at 480-539 (GVRGDRRHSSDINHLVTQGRESPEGSYTDDANQEVRGPPQQHGHHSEFDDEFEDDDPLPA) is disordered. Ser-488, Ser-501, and Ser-505 each carry phosphoserine. Positions 522 to 605 (GHHSEFDDEF…VTLEKNSKGS (84 aa)) are interaction with DNM1. The span at 527 to 536 (FDDEFEDDDP) shows a compositional bias: acidic residues. Positions 538 to 599 (PAIGHCKAIY…PTTYIDVTLE (62 aa)) constitute an SH3 domain. The interaction with DNM2 and WASL stretch occupies residues 541–597 (GHCKAIYPFDGHNEGTLAMKEGEVLYIIEEDKGDGWTRARRQNGEEGYVPTTYIDVT). The segment at 541-605 (GHCKAIYPFD…VTLEKNSKGS (65 aa)) is interaction with DAAM1, DIAPH1 and DIAPH2.

Belongs to the FNBP1 family. In terms of assembly, homodimerizes, the dimers can polymerize end-to-end to form filamentous structures. Interacts with GTP-bound CDC42. Interacts with DAAM1, DIAPH1, DIAPH2, DNM1, DNM2 and WASL/N-WASP. Interacts with ATG3. Interacts (via SH3 domain) with ABI1, WASF2, CDC42 and WIPF1. Isoform 1 is expressed in brain. Isoform 2 is expressed in brain, kidney and lung. Within the brain expression is seen in cortical neurons, hippocampal pyramidal neurons, hypothalamus and piriform cortex.

It localises to the cytoplasm. The protein localises to the cytoskeleton. It is found in the cell cortex. Its subcellular location is the cytoplasmic vesicle. The protein resides in the cell membrane. In terms of biological role, required to coordinate membrane tubulation with reorganization of the actin cytoskeleton during endocytosis. May bind to lipids such as phosphatidylinositol 4,5-bisphosphate and phosphatidylserine and promote membrane invagination and the formation of tubules. Also promotes CDC42-induced actin polymerization by activating the WASL-WASPIP complex, the predominant form of WASL/N-WASP in cells. Actin polymerization may promote the fission of membrane tubules to form endocytic vesicles. Essential for autophagy of intracellular bacterial pathogens. May negatively regulate neurite extension and axon branching in developing neurons. The polypeptide is Formin-binding protein 1-like (Fnbp1l) (Rattus norvegicus (Rat)).